We begin with the raw amino-acid sequence, 665 residues long: MVEGFSLSLMFLLVSHFFVSGVMSRNFTIENKCDYTVWPGFLTMTTAVSLPTNGFSLKKGESRVINVPPSWSGRLWGRSFCSTSSTGNFSCATGDCGSGKIECSDSGARPPTTLIDFTLDATDGQDFYDVSVVDGYNLPLVVVPQRLGSGRTCSNVGCVVNLNKTCPSELKVMGSSNKEHPIACMNACQKFGLPEFCCYGEYGKPAKCQPTLYSTNFKNECPLAYSYAYDNENNTFRCSNSPNYVITFCPNDISSMSQPSKETNGGTKQKSSWKLKLIVGVSAALTLMILIVVVIIVRTKNMRNSEWNDQNVEAVAMLKRYSYTRVKKMTNSFAHVLGKGGFGTVYKGKLADSGRDVAVKILKVSEGNGEEFINEVASMSRTSHVNIVSLLGFCYEKNKRAIIYEFMPNGSLDKYISANMSTKMEWERLYDVAVGISRGLEYLHNRCVTRIVHFDIKPQNILMDENLCPKISDFGLAKLCKNKESIISMLHMRGTFGYIAPEMFSKNFGAVSHKSDVYSYGMVVLEMIGAKNIEKVEYSGSNNGSMYFPEWVYKDFEKGEITRIFGDSITDEEEKIAKKLVLVALWCIQMNPSDRPPMIKVIEMLEGNLEALQVPPNPLLFSPEETVPDTLEDSDDTSTFFNPSHFERGTLLDSEDVLQHGSRSS.

The signal sequence occupies residues 1 to 24 (MVEGFSLSLMFLLVSHFFVSGVMS). Residues 25-276 (RNFTIENKCD…TKQKSSWKLK (252 aa)) are Extracellular-facing. 2 N-linked (GlcNAc...) asparagine glycosylation sites follow: Asn26 and Asn88. Intrachain disulfides connect Cys33-Cys249, Cys81-Cys91, Cys96-Cys103, Cys153-Cys238, Cys158-Cys221, Cys166-Cys184, Cys188-Cys197, and Cys198-Cys208. N-linked (GlcNAc...) asparagine glycosylation occurs at Asn163. Asn233 carries an N-linked (GlcNAc...) asparagine glycan. A helical transmembrane segment spans residues 277–297 (LIVGVSAALTLMILIVVVIIV). Over 298–665 (RTKNMRNSEW…DVLQHGSRSS (368 aa)) the chain is Cytoplasmic. Positions 331-620 (NSFAHVLGKG…ALQVPPNPLL (290 aa)) constitute a Protein kinase domain. ATP is bound by residues 337–345 (LGKGGFGTV) and Lys360. Asp455 functions as the Proton acceptor in the catalytic mechanism.

This sequence in the N-terminal section; belongs to the thaumatin family. The protein in the C-terminal section; belongs to the protein kinase superfamily. Ser/Thr protein kinase family. Post-translationally, autophosphorylated in vitro. As to expression, expressed in roots. Expressed at low levels in stems.

It localises to the membrane. It catalyses the reaction L-seryl-[protein] + ATP = O-phospho-L-seryl-[protein] + ADP + H(+). It carries out the reaction L-threonyl-[protein] + ATP = O-phospho-L-threonyl-[protein] + ADP + H(+). Possesses kinase activity in vitro. The protein is PR5-like receptor kinase of Arabidopsis thaliana (Mouse-ear cress).